Here is a 356-residue protein sequence, read N- to C-terminus: tRNA N6-adenosine threonylcarbamoyltransferase (356 aa).

Positions 115 and 119 each coordinate Fe cation. Substrate-binding positions include 138-142 (LVSGG), D171, G184, and N283. D311 lines the Fe cation pocket.

It belongs to the KAE1 / TsaD family. Fe(2+) is required as a cofactor.

The protein resides in the cytoplasm. The catalysed reaction is L-threonylcarbamoyladenylate + adenosine(37) in tRNA = N(6)-L-threonylcarbamoyladenosine(37) in tRNA + AMP + H(+). In terms of biological role, required for the formation of a threonylcarbamoyl group on adenosine at position 37 (t(6)A37) in tRNAs that read codons beginning with adenine. Is involved in the transfer of the threonylcarbamoyl moiety of threonylcarbamoyl-AMP (TC-AMP) to the N6 group of A37, together with TsaE and TsaB. TsaD likely plays a direct catalytic role in this reaction. The polypeptide is tRNA N6-adenosine threonylcarbamoyltransferase (Synechococcus sp. (strain WH7803)).